The following is a 130-amino-acid chain: Small ribosomal subunit protein bS6 (130 aa).

A disordered region spans residues 100 to 130 (SPMVKAKDERRERHDFASEANDDSEAGDSEE). Positions 104-116 (KAKDERRERHDFA) are enriched in basic and acidic residues. Positions 119 to 130 (ANDDSEAGDSEE) are enriched in acidic residues.

The protein belongs to the bacterial ribosomal protein bS6 family.

Its function is as follows. Binds together with bS18 to 16S ribosomal RNA. The chain is Small ribosomal subunit protein bS6 from Yersinia pestis (strain Pestoides F).